We begin with the raw amino-acid sequence, 513 residues long: ATP synthase subunit alpha (513 aa).

Position 170 to 177 (170 to 177) interacts with ATP; sequence GDRQTGKT.

Belongs to the ATPase alpha/beta chains family. F-type ATPases have 2 components, CF(1) - the catalytic core - and CF(0) - the membrane proton channel. CF(1) has five subunits: alpha(3), beta(3), gamma(1), delta(1), epsilon(1). CF(0) has four main subunits: a(1), b(1), b'(1) and c(9-12).

The protein localises to the cell inner membrane. It catalyses the reaction ATP + H2O + 4 H(+)(in) = ADP + phosphate + 5 H(+)(out). Produces ATP from ADP in the presence of a proton gradient across the membrane. The alpha chain is a regulatory subunit. The sequence is that of ATP synthase subunit alpha from Gloeobacter violaceus (strain ATCC 29082 / PCC 7421).